The chain runs to 101 residues: Urease subunit beta (101 aa).

Belongs to the urease beta subunit family. In terms of assembly, heterotrimer of UreA (gamma), UreB (beta) and UreC (alpha) subunits. Three heterotrimers associate to form the active enzyme.

It localises to the cytoplasm. The enzyme catalyses urea + 2 H2O + H(+) = hydrogencarbonate + 2 NH4(+). It functions in the pathway nitrogen metabolism; urea degradation; CO(2) and NH(3) from urea (urease route): step 1/1. The sequence is that of Urease subunit beta from Pseudomonas fluorescens (strain SBW25).